Consider the following 1496-residue polypeptide: Chromosome partition protein MukB (1496 aa).

63–70 (GGNGAGKS) lines the ATP pocket. 2 coiled-coil regions span residues 328–493 (KLEL…QRLS) and 536–632 (KMQA…APAW). The interval 694–811 (PDGSDDVRLN…EVPLFGRAAR (118 aa)) is flexible hinge. Coiled-coil stretches lie at residues 861–1171 (NPEE…SAEE) and 1235–1291 (IDAI…LQNI). Over residues 1082-1091 (RARSRRDELQ) the composition is skewed to basic and acidic residues. The tract at residues 1082 to 1101 (RARSRRDELQQRLSQQRSRK) is disordered.

The protein belongs to the SMC family. MukB subfamily. As to quaternary structure, homodimerization via its hinge domain. Binds to DNA via its C-terminal region. Interacts, and probably forms a ternary complex, with MukE and MukF via its C-terminal region. The complex formation is stimulated by calcium or magnesium. Interacts with tubulin-related protein FtsZ.

It is found in the cytoplasm. It localises to the nucleoid. Plays a central role in chromosome condensation, segregation and cell cycle progression. Functions as a homodimer, which is essential for chromosome partition. Involved in negative DNA supercoiling in vivo, and by this means organize and compact chromosomes. May achieve or facilitate chromosome segregation by condensation DNA from both sides of a centrally located replisome during cell division. In Actinobacillus pleuropneumoniae serotype 3 (strain JL03), this protein is Chromosome partition protein MukB.